The sequence spans 372 residues: 3-galactosyl-N-acetylglucosaminide 4-alpha-L-fucosyltransferase FUT3 (372 aa).

Residues 1–15 lie on the Cytoplasmic side of the membrane; sequence MDPLGAAKTQWPWRR. Residues 16 to 34 traverse the membrane as a helical; Signal-anchor for type II membrane protein segment; that stretch reads CLAALLFQLLVAVCFFSYL. Residues 35–372 lie on the Lumenal side of the membrane; sequence RVSRDDATGS…MVRSIAAWFT (338 aa). Residues 40–68 are disordered; that stretch reads DATGSPRPGLMAVEPVTGAPGGSSRQDTT. N-linked (GlcNAc...) asparagine glycans are attached at residues N165 and N196.

This sequence belongs to the glycosyltransferase 10 family. In terms of processing, glycosylated.

It localises to the golgi apparatus. The protein resides in the golgi stack membrane. It catalyses the reaction a beta-D-galactosyl-(1-&gt;3)-N-acetyl-beta-D-glucosaminyl derivative + GDP-beta-L-fucose = a beta-D-galactosyl-(1-&gt;3)-[alpha-L-fucosyl-(1-&gt;4)]-N-acetyl-beta-D-glucosaminyl derivative + GDP + H(+). It carries out the reaction an N-acetyl-alpha-neuraminyl-(2-&gt;3)-beta-D-galactosyl-(1-&gt;4)-N-acetyl-beta-D-glucosaminyl derivative + GDP-beta-L-fucose = an alpha-Neu5Ac-(2-&gt;3)-beta-D-Gal-(1-&gt;4)-[alpha-L-Fuc-(1-&gt;3)]-beta-D-GlcNAc derivative + GDP + H(+). The catalysed reaction is a beta-D-galactosyl-(1-&gt;4)-N-acetyl-beta-D-glucosaminyl derivative + GDP-beta-L-fucose = a beta-D-galactosyl-(1-&gt;4)-[alpha-L-fucosyl-(1-&gt;3)]-N-acetyl-beta-D-glucosaminyl derivative + GDP + H(+). The enzyme catalyses an alpha-Neu5Ac-(2-&gt;3)-beta-D-Gal-(1-&gt;4)-beta-D-GlcNAc-(1-&gt;3)-beta-D-Gal-(1-&gt;4)-[alpha-L-Fuc-(1-&gt;3)]-beta-D-GlcNAc derivative + GDP-beta-L-fucose = an alpha-Neu5Ac-(2-&gt;3)-beta-D-Gal-(1-&gt;4)-[alpha-L-Fuc-(1-&gt;3)]-beta-D-GlcNAc-(1-&gt;3)-beta-D-Gal-(1-&gt;4)-[alpha-L-Fuc-(1-&gt;3)]-beta-D-GlcNAc derivative + GDP + H(+). It catalyses the reaction Lc4Cer + GDP-beta-L-fucose = a lactoside III(4)-a-Fuc-Lc4Cer + GDP + H(+). It carries out the reaction a beta-D-Gal-(1-&gt;3)-beta-D-GlcNAc-(1-&gt;3)-beta-D-Gal-(1-&gt;4)-beta-D-Glc-(1&lt;-&gt;1')-Cer(d18:1(4E)) + GDP-beta-L-fucose = a III(4)-a-Fuc-Lc4Cer(d18:1(4E)) + GDP + H(+). The catalysed reaction is N-acetyl-alpha-neuraminosyl-(2-&gt;3)-beta-D-galactosyl-(1-&gt;3)-[N-acetyl-alpha-neuraminosyl-(2-&gt;6)]-N-acetyl-beta-D-glucosaminyl-(1-&gt;3)-beta-D-galactosyl-(1-&gt;4)-beta-D-glucosyl-(1&lt;-&gt;1')-N-acyl-sphing-4-enine + GDP-beta-L-fucose = N-acetyl-alpha-neuraminosyl-(2-&gt;3)-beta-D-galactosyl-(1-&gt;3)-alpha-L-fucosyl-(1-&gt;4)-[N-acetyl-alpha-neuraminosyl-(2-&gt;6)-N-acetyl-beta-D-glucosaminyl-(1-&gt;3)]-beta-D-galactosyl-(1-&gt;4)-beta-D-glucosyl-(1&lt;-&gt;1')-N-acyl-sphing-4-enine + GDP + H(+). The enzyme catalyses N-acetyl-alpha-neuraminosyl-(2-&gt;3)-beta-D-galactosyl-(1-&gt;3)-N-acetyl-beta-D-glucosaminyl-(1-&gt;3)-beta-D-galactosyl-(1-&gt;4)-beta-D-glucosyl-(1&lt;-&gt;1')-N-acyl-sphing-4-enine + GDP-beta-L-fucose = N-acetyl-alpha-neuraminosyl-(2-&gt;3)-beta-D-galactosyl-(1-&gt;3)-alpha-L-fucosyl-(1-&gt;4)-[N-acetyl-beta-D-glucosaminyl-(1-&gt;3)]-beta-D-galactosyl-(1-&gt;4)-beta-D-glucosyl-(1&lt;-&gt;1')-N-acyl-sphing-4-enine + GDP + H(+). It catalyses the reaction beta-D-galactosyl-(1-&gt;3)-N-acetyl-D-glucosamine + GDP-beta-L-fucose = beta-D-galactosyl-(1-&gt;3)-[alpha-L-fucosyl-(1-&gt;4)]-N-acetyl-D-glucosamine + GDP + H(+). It carries out the reaction alpha-L-Fuc-(1-&gt;2)-beta-D-Gal-(1-&gt;3)-D-GlcNAc + GDP-beta-L-fucose = alpha-L-Fuc-(1-&gt;2)-beta-D-Gal-(1-&gt;3)-[alpha-L-Fuc-(1-&gt;4)]-D-GlcNAc + GDP + H(+). The catalysed reaction is alpha-L-Fuc-(1-&gt;2)-beta-D-Gal-(1-&gt;4)-D-GlcNAc + GDP-beta-L-fucose = alpha-L-Fuc-(1-&gt;2)-beta-D-Gal-(1-&gt;4)-[alpha-L-Fuc-(1-&gt;3)]-D-GlcNAc + GDP + H(+). The enzyme catalyses beta-D-galactosyl-(1-&gt;4)-N-acetyl-D-glucosamine + GDP-beta-L-fucose = beta-D-galactosyl-(1-&gt;4)-[alpha-L-fucosyl-(1-&gt;3)]-N-acetyl-D-glucosamine + GDP + H(+). It catalyses the reaction lactose + GDP-beta-L-fucose = beta-D-galactosyl-(1-&gt;4)-[alpha-L-fucosyl-(1-&gt;3)]-D-glucose + GDP + H(+). It carries out the reaction an alpha-Neu5Ac-(2-&gt;3)-beta-D-Gal-(1-&gt;3)-D-GlcNAc derivative + GDP-beta-L-fucose = an alpha-Neu5Ac-(2-&gt;3)-beta-D-Gal-(1-&gt;3)-[alpha-L-Fuc-(1-&gt;4)]-beta-D-GlcNAc derivative + GDP + H(+). Its pathway is protein modification; protein glycosylation. Its function is as follows. Catalyzes the transfer of L-fucose, from a guanosine diphosphate-beta-L-fucose, to both the subterminal N-acetyl glucosamine (GlcNAc) of type 1 chain (beta-D-Gal-(1-&gt;3)-beta-D-GlcNAc) glycolipids and oligosaccharides via an alpha(1,4) linkage, and the subterminal glucose (Glc) or GlcNAc of type 2 chain (beta-D-Gal-(1-&gt;4)-beta-D-GlcNAc) oligosaccharides via an alpha(1,3) linkage, independently of the presence of terminal alpha-L-fucosyl-(1,2) moieties on the terminal galactose of these acceptors and participates in the blood groups Lewis determination and expression of Lewis a (Le(a)), lewis b (Le(b)), Lewis x/SSEA-1 (Le(x)) and lewis y (Le(y)) antigens. Also catalyzes the transfer of L-fucose to subterminal GlcNAc of sialyl- and disialyl-lactotetraosylceramide to produce sialyl Lewis a (sLe(a)) and disialyl Lewis a via an alpha(1,4) linkage and therefore may regulate cell surface sialyl Lewis a expression and consequently regulates adhesive properties to E-selectin, cell proliferation and migration. Catalyzes the transfer of an L-fucose to 3'-sialyl-N-acetyllactosamine by an alpha(1,3) linkage, which allows the formation of sialyl-Lewis x structure and therefore may regulate the sialyl-Lewis x surface antigen expression and consequently adhesive properties to E-selectin. Prefers type 1 chain over type 2 acceptors. Type 1 tetrasaccharide is a better acceptor than type 1 disaccharide suggesting that a beta anomeric configuration of GlcNAc in the substrate is preferred. Lewis-positive (Le(+)) individuals have an active enzyme while Lewis-negative (Le(-)) individuals have an inactive enzyme. This Pongo pygmaeus (Bornean orangutan) protein is 3-galactosyl-N-acetylglucosaminide 4-alpha-L-fucosyltransferase FUT3.